A 253-amino-acid polypeptide reads, in one-letter code: Phosphate import ATP-binding protein PstB (253 aa).

The 244-residue stretch at 5-248 folds into the ABC transporter domain; that stretch reads IETVNLNVYY…PEHELTEKYV (244 aa). 37–44 contributes to the ATP binding site; the sequence is GPSGCGKS.

The protein belongs to the ABC transporter superfamily. Phosphate importer (TC 3.A.1.7) family. The complex is composed of two ATP-binding proteins (PstB), two transmembrane proteins (PstC and PstA) and a solute-binding protein (PstS).

The protein resides in the cell membrane. The catalysed reaction is phosphate(out) + ATP + H2O = ADP + 2 phosphate(in) + H(+). Functionally, part of the ABC transporter complex PstSACB involved in phosphate import. Responsible for energy coupling to the transport system. This chain is Phosphate import ATP-binding protein PstB, found in Thermococcus kodakarensis (strain ATCC BAA-918 / JCM 12380 / KOD1) (Pyrococcus kodakaraensis (strain KOD1)).